The following is a 486-amino-acid chain: Glutamyl-tRNA(Gln) amidotransferase subunit A (486 aa).

Catalysis depends on charge relay system residues Lys-79 and Ser-154. Ser-178 functions as the Acyl-ester intermediate in the catalytic mechanism.

Belongs to the amidase family. GatA subfamily. Heterotrimer of A, B and C subunits.

The catalysed reaction is L-glutamyl-tRNA(Gln) + L-glutamine + ATP + H2O = L-glutaminyl-tRNA(Gln) + L-glutamate + ADP + phosphate + H(+). Functionally, allows the formation of correctly charged Gln-tRNA(Gln) through the transamidation of misacylated Glu-tRNA(Gln) in organisms which lack glutaminyl-tRNA synthetase. The reaction takes place in the presence of glutamine and ATP through an activated gamma-phospho-Glu-tRNA(Gln). This Myxococcus xanthus (strain DK1622) protein is Glutamyl-tRNA(Gln) amidotransferase subunit A.